The primary structure comprises 286 residues: MASLRDIKAKITSTKKTSQITKAMEMVSASKLNRAEQNAKSFVPYMEKIQEVVASIAQGSKGINHPMLNARPVKRTGYIVITSDRGLAGGYNSNVLRTVSNVIRERHNMDSNQYSIIVLGRLGRDYLKRRGFNIIDEVVGLSDHPSFTDIKDLASRAIAMFADGAYDELYIYYNHYVSKISQEVTENKILPLTDVASDKPTTAYEFEPSEEEILKVLLPQYAESLVYGALLDGKASEHAARMTAMKSATDNAMEVIDSLTLSFNRARQAAITQEITEIVGGAAALE.

The protein belongs to the ATPase gamma chain family. F-type ATPases have 2 components, CF(1) - the catalytic core - and CF(0) - the membrane proton channel. CF(1) has five subunits: alpha(3), beta(3), gamma(1), delta(1), epsilon(1). CF(0) has three main subunits: a, b and c.

It localises to the cell membrane. Functionally, produces ATP from ADP in the presence of a proton gradient across the membrane. The gamma chain is believed to be important in regulating ATPase activity and the flow of protons through the CF(0) complex. This Bacillus cereus (strain G9842) protein is ATP synthase gamma chain.